The following is a 142-amino-acid chain: Transcriptional regulator MraZ (142 aa).

2 consecutive SpoVT-AbrB domains span residues 5–48 (EFEY…PLCE) and 77–120 (AFDV…DKET).

Belongs to the MraZ family. As to quaternary structure, forms oligomers.

Its subcellular location is the cytoplasm. The protein resides in the nucleoid. The sequence is that of Transcriptional regulator MraZ from Dehalococcoides mccartyi (strain ATCC BAA-2100 / JCM 16839 / KCTC 5957 / BAV1).